The chain runs to 268 residues: Interleukin-1 alpha (268 aa).

The propeptide occupies 1-112 (MAKVPDLFED…NTEEEIIKPR (112 aa)). At Lys-82 the chain carries N6-acetyllysine. The interval 82–86 (KKRRL) is nuclear localization signal (NLS). Ser-87 is subject to Phosphoserine. Asn-102 and Asn-141 each carry an N-linked (GlcNAc...) asparagine glycan.

Belongs to the IL-1 family. As to quaternary structure, monomer. Interacts with TMED10; the interaction mediates the translocation from the cytoplasm into the ERGIC (endoplasmic reticulum-Golgi intermediate compartment) and thereby secretion. Interacts with IL1R1. Interacts with S100A13; this interaction is the first step in the export of IL1A, followed by direct translocation of this complex across the plasma membrane. Post-translationally, acetylated within its nuclear localization sequence, which impacts subcellular localization. In terms of processing, proteolytic processed by CAPN1 in a calcium-dependent manner. Cleavage from 31 kDa precursor to 18 kDa biologically active molecules. Phosphorylated. Phosphorylation greatly enhances susceptibility to digestion and promotes the conversion of pre-IL1A alpha to the biologically active IL1A.

It is found in the nucleus. The protein localises to the cytoplasm. The protein resides in the secreted. Functionally, cytokine constitutively present intracellularly in nearly all resting non-hematopoietic cells that plays an important role in inflammation and bridges the innate and adaptive immune systems. After binding to its receptor IL1R1 together with its accessory protein IL1RAP, forms the high affinity interleukin-1 receptor complex. Signaling involves the recruitment of adapter molecules such as MYD88, IRAK1 or IRAK4. In turn, mediates the activation of NF-kappa-B and the three MAPK pathways p38, p42/p44 and JNK pathways. Within the cell, acts as an alarmin and cell death results in its liberation in the extracellular space after disruption of the cell membrane to induce inflammation and alert the host to injury or damage. In addition to its role as a danger signal, which occurs when the cytokine is passively released by cell necrosis, directly senses DNA damage and acts as signal for genotoxic stress without loss of cell integrity. The chain is Interleukin-1 alpha (IL1A) from Bubalus carabanensis (Swamp type water buffalo).